The following is a 293-amino-acid chain: Probable endonuclease 4 (293 aa).

Residues H78, H118, E154, D188, H191, H225, D238, H240, and E270 each contribute to the Zn(2+) site.

The protein belongs to the AP endonuclease 2 family. Zn(2+) is required as a cofactor.

It catalyses the reaction Endonucleolytic cleavage to 5'-phosphooligonucleotide end-products.. In terms of biological role, endonuclease IV plays a role in DNA repair. It cleaves phosphodiester bonds at apurinic or apyrimidinic (AP) sites, generating a 3'-hydroxyl group and a 5'-terminal sugar phosphate. This chain is Probable endonuclease 4, found in Vibrio vulnificus (strain YJ016).